Reading from the N-terminus, the 504-residue chain is Maturase K (504 aa).

It belongs to the intron maturase 2 family. MatK subfamily.

The protein localises to the plastid. It localises to the chloroplast. Functionally, usually encoded in the trnK tRNA gene intron. Probably assists in splicing its own and other chloroplast group II introns. The sequence is that of Maturase K from Nepenthes gracilis (Slender pitcher plant).